The following is a 226-amino-acid chain: Ribonuclease 3 (226 aa).

The region spanning 4–127 (LEEFEKKLGY…VMGAIYLEKG (124 aa)) is the RNase III domain. Glu40 contributes to the Mg(2+) binding site. The active site involves Asp44. The Mg(2+) site is built by Asn113 and Glu116. Residue Glu116 is part of the active site. The DRBM domain occupies 154 to 223 (DFKTALQEFT…AKEALKILKA (70 aa)).

The protein belongs to the ribonuclease III family. As to quaternary structure, homodimer. Requires Mg(2+) as cofactor.

It localises to the cytoplasm. The catalysed reaction is Endonucleolytic cleavage to 5'-phosphomonoester.. Functionally, digests double-stranded RNA. Involved in the processing of primary rRNA transcript to yield the immediate precursors to the large and small rRNAs (23S and 16S). Processes some mRNAs, and tRNAs when they are encoded in the rRNA operon. Processes pre-crRNA and tracrRNA of type II CRISPR loci if present in the organism. The polypeptide is Ribonuclease 3 (Nitratiruptor sp. (strain SB155-2)).